The chain runs to 420 residues: Probable secreted beta-glucosidase SUN4 (420 aa).

Residues Met1–Pro24 form the signal peptide. The interval Thr89–Ala145 is disordered. N-linked (GlcNAc...) asparagine glycosylation occurs at Asn395.

The protein belongs to the SUN family. Glycosylated.

The protein localises to the secreted. The protein resides in the cell wall. In terms of biological role, involved in the remodeling of the cell wall during the various phases of yeast culture development and under various environmental conditions and plays a role in septation. This is Probable secreted beta-glucosidase SUN4 (SUN4) from Saccharomyces cerevisiae (strain ATCC 204508 / S288c) (Baker's yeast).